Reading from the N-terminus, the 207-residue chain is MPKVALYNQNGQTVGEIELNDAVFGIEPNKHVLFEAVIMQRASMRQGTHKTKNRAEVSGGGRKPWRQKGTGRARQGSIRAPQWRGGGTVFGPVPRSYSYKLPKKVRRLAIKSALSSKVLENDIVVLDQLSLEAPKTKEMVKILNNLSVDRKALIVTDELNENVYLSARNIPGVKVVPANGINVLDVLNHDKLVITKAAVEKVEEVLA.

Positions 44–78 (MRQGTHKTKNRAEVSGGGRKPWRQKGTGRARQGSI) are disordered.

This sequence belongs to the universal ribosomal protein uL4 family. Part of the 50S ribosomal subunit.

One of the primary rRNA binding proteins, this protein initially binds near the 5'-end of the 23S rRNA. It is important during the early stages of 50S assembly. It makes multiple contacts with different domains of the 23S rRNA in the assembled 50S subunit and ribosome. Functionally, this protein when expressed in E.coli represses the endogenous S10 operon; this may not occur in B.stearothermophilus however. Its function is as follows. Forms part of the polypeptide exit tunnel. This Geobacillus stearothermophilus (Bacillus stearothermophilus) protein is Large ribosomal subunit protein uL4 (rplD).